The primary structure comprises 283 residues: Adenylate kinase 2, chloroplastic (283 aa).

The N-terminal 59 residues, 1–59 (MTGCVNSISPPPVTLYRHRASPSRSSFSLSGDALHSLYRHRRVSRSPSIIAPKFQIVAA), are a transit peptide targeting the chloroplast. Residue 74–79 (ASGKGT) participates in ATP binding. The segment at 94-123 (SAGDLLRAEIASGSENGRRAKEHMEKGQLV) is NMP. AMP is bound by residues R100, 121 to 123 (QLV), 150 to 153 (GYPR), and Q157. Residues 187 to 220 (GRRLDPVTGKIYHLKYSPPETEEIAVRLTQRFDD) are LID. R188 is an ATP binding site. AMP-binding residues include R217 and R228.

The protein belongs to the adenylate kinase family. In terms of assembly, monomer.

The protein resides in the plastid. Its subcellular location is the chloroplast stroma. It catalyses the reaction AMP + ATP = 2 ADP. Catalyzes the reversible transfer of the terminal phosphate group between ATP and AMP. Plays an important role in cellular energy homeostasis and in adenine nucleotide metabolism. Plays a major role in the equilibration of adenylates and de novo synthesis of ADP in the plastid stroma. In Arabidopsis thaliana (Mouse-ear cress), this protein is Adenylate kinase 2, chloroplastic.